The chain runs to 47 residues: Protein DVU_0533 (47 aa).

The chain crosses the membrane as a helical span at residues 18-37 (WTYILMGVTLLVYVGYWLFL).

It is found in the cell membrane. HMWC (high-molecular-weight cytochrome c), ORF2, ORF3, ORF4, ORF5 and ORF6 in the HMC operon form a transmembrane protein complex that allows electron flow from the periplasmic hydrogenase to the cytoplasmic enzymes that catalyze reduction of sulfates. The polypeptide is Protein DVU_0533 (Nitratidesulfovibrio vulgaris (strain ATCC 29579 / DSM 644 / CCUG 34227 / NCIMB 8303 / VKM B-1760 / Hildenborough) (Desulfovibrio vulgaris)).